The sequence spans 186 residues: Probable chorismate pyruvate-lyase (186 aa).

3 residues coordinate substrate: Arg80, Leu118, and Glu170.

This sequence belongs to the UbiC family.

It is found in the cytoplasm. It carries out the reaction chorismate = 4-hydroxybenzoate + pyruvate. Its pathway is cofactor biosynthesis; ubiquinone biosynthesis. Its function is as follows. Removes the pyruvyl group from chorismate, with concomitant aromatization of the ring, to provide 4-hydroxybenzoate (4HB) for the ubiquinone pathway. The protein is Probable chorismate pyruvate-lyase of Pseudomonas syringae pv. syringae (strain B728a).